The sequence spans 551 residues: Cation/acetate symporter ActP (551 aa).

14 consecutive transmembrane segments (helical) span residues 5 to 25 (HWSA…ALTG), 34 to 54 (IQAI…TYWA), 77 to 97 (GLAI…SALV), 104 to 124 (GLIY…LIAE), 150 to 170 (LSAC…MVGA), 184 to 204 (VAVV…GMLA), 207 to 227 (WVQI…AIMV), 263 to 283 (ISAL…PHIL), 304 to 324 (GFIG…ILLV), 356 to 376 (FFLG…VAGL), 406 to 426 (VSKI…ILFE), 430 to 450 (IAFM…PIII), 469 to 489 (LGLS…VTIL), and 498 to 518 (YEYP…FFSI).

It belongs to the sodium:solute symporter (SSF) (TC 2.A.21) family.

It localises to the cell inner membrane. Transports acetate. The polypeptide is Cation/acetate symporter ActP (Yersinia pseudotuberculosis serotype IB (strain PB1/+)).